The following is a 421-amino-acid chain: MGIKGLAKLLSDEAPDCIREVELKSLHGRKIAIDASMAIYQFLIAVRSGGPNQQATMLTNAEGETTSHIQGMFNRTIRYMTEGIRPVFVFDGKPPDVKSHELIKRREKREKAQAALAVASEEGNVEEQDKQSKRLVRAGTKENEDCRKLLTLMGVPVVTAPCEAEAQAAALCKAGLVYATGTEDMDALTFATPILVRKLTFANASKSMVQTMNYNKVIEGLAISHDQFVDLCIMLGCDYCDTIRGVGPKTALKLIREHGNIEKVIETIDRKKFVVPESWVPNEKKLDAQSDDDDEEGVESPSKEENNGIVDTEELIPAYVQARKLFNEHEVLNDIELKWKPCQAEDLQKFLVDDMGFNVDRVKNNIEKLQAAYKANSKPQTRMDSFFAVKANPNAAKSAAKRKADAAKAKAAVSKKKTKKH.

An N-domain region spans residues 1 to 109 (MGIKGLAKLL…HELIKRREKR (109 aa)). Position 34 (Asp34) interacts with Mg(2+). Residues Arg47 and Arg75 each coordinate DNA. Residues Asp91, Glu163, Glu165, Asp184, and Asp186 each coordinate Mg(2+). An I-domain region spans residues 127 to 258 (EQDKQSKRLV…KTALKLIREH (132 aa)). DNA is bound at residue Glu163. DNA contacts are provided by Gly236 and Asp238. Asp238 contacts Mg(2+). The tract at residues 284 to 307 (KKLDAQSDDDDEEGVESPSKEENN) is disordered. Residues 289-298 (QSDDDDEEGV) show a composition bias toward acidic residues. The tract at residues 379–387 (PQTRMDSFF) is interaction with PCNA. The interval 398-421 (SAAKRKADAAKAKAAVSKKKTKKH) is disordered.

Belongs to the XPG/RAD2 endonuclease family. FEN1 subfamily. Interacts with PCNA. Three molecules of FEN1 bind to one PCNA trimer with each molecule binding to one PCNA monomer. PCNA stimulates the nuclease activity without altering cleavage specificity. The cofactor is Mg(2+). Post-translationally, phosphorylated. Phosphorylation upon DNA damage induces relocalization to the nuclear plasma.

The protein localises to the nucleus. It localises to the nucleolus. Its subcellular location is the nucleoplasm. The protein resides in the mitochondrion. In terms of biological role, structure-specific nuclease with 5'-flap endonuclease and 5'-3' exonuclease activities involved in DNA replication and repair. During DNA replication, cleaves the 5'-overhanging flap structure that is generated by displacement synthesis when DNA polymerase encounters the 5'-end of a downstream Okazaki fragment. It enters the flap from the 5'-end and then tracks to cleave the flap base, leaving a nick for ligation. Also involved in the long patch base excision repair (LP-BER) pathway, by cleaving within the apurinic/apyrimidinic (AP) site-terminated flap. Acts as a genome stabilization factor that prevents flaps from equilibrating into structures that lead to duplications and deletions. Also possesses 5'-3' exonuclease activity on nicked or gapped double-stranded DNA, and exhibits RNase H activity. Also involved in replication and repair of rDNA and in repairing mitochondrial DNA. In Phaeodactylum tricornutum (strain CCAP 1055/1), this protein is Flap endonuclease 1.